The chain runs to 321 residues: Phosphate acyltransferase (321 aa).

This sequence belongs to the PlsX family. In terms of assembly, homodimer. Probably interacts with PlsY.

It is found in the cytoplasm. It catalyses the reaction a fatty acyl-[ACP] + phosphate = an acyl phosphate + holo-[ACP]. Its pathway is lipid metabolism; phospholipid metabolism. Catalyzes the reversible formation of acyl-phosphate (acyl-PO(4)) from acyl-[acyl-carrier-protein] (acyl-ACP). This enzyme utilizes acyl-ACP as fatty acyl donor, but not acyl-CoA. The sequence is that of Phosphate acyltransferase from Chlamydia trachomatis serovar A (strain ATCC VR-571B / DSM 19440 / HAR-13).